A 173-amino-acid polypeptide reads, in one-letter code: Crossover junction endodeoxyribonuclease RuvC (173 aa).

Catalysis depends on residues aspartate 8, glutamate 69, and aspartate 141. 3 residues coordinate Mg(2+): aspartate 8, glutamate 69, and aspartate 141.

It belongs to the RuvC family. In terms of assembly, homodimer which binds Holliday junction (HJ) DNA. The HJ becomes 2-fold symmetrical on binding to RuvC with unstacked arms; it has a different conformation from HJ DNA in complex with RuvA. In the full resolvosome a probable DNA-RuvA(4)-RuvB(12)-RuvC(2) complex forms which resolves the HJ. It depends on Mg(2+) as a cofactor.

Its subcellular location is the cytoplasm. It carries out the reaction Endonucleolytic cleavage at a junction such as a reciprocal single-stranded crossover between two homologous DNA duplexes (Holliday junction).. The RuvA-RuvB-RuvC complex processes Holliday junction (HJ) DNA during genetic recombination and DNA repair. Endonuclease that resolves HJ intermediates. Cleaves cruciform DNA by making single-stranded nicks across the HJ at symmetrical positions within the homologous arms, yielding a 5'-phosphate and a 3'-hydroxyl group; requires a central core of homology in the junction. The consensus cleavage sequence is 5'-(A/T)TT(C/G)-3'. Cleavage occurs on the 3'-side of the TT dinucleotide at the point of strand exchange. HJ branch migration catalyzed by RuvA-RuvB allows RuvC to scan DNA until it finds its consensus sequence, where it cleaves and resolves the cruciform DNA. In Xylella fastidiosa (strain Temecula1 / ATCC 700964), this protein is Crossover junction endodeoxyribonuclease RuvC.